The following is a 115-amino-acid chain: MGSFWDAFAVYDKKKHADPSVYGGNHNNTGDSKTQVMFSKEYRQPRTHQQENLQSMRRSSIGSQDSSDVEDVKEGRLPAEVEIPKNVDISNMSQGEFLRLYESLRRGEPDNKVNR.

The segment at 16–77 is disordered; that stretch reads HADPSVYGGN…DVEDVKEGRL (62 aa). Composition is skewed to polar residues over residues 25–37 and 50–66; these read NHNN…TQVM and QENL…SQDS.

Belongs to the SPG4 family.

Functionally, stationary phase-essential protein not required for growth on nonfermentable carbon sources. The sequence is that of Stationary phase protein 4 (SPG4) from Saccharomyces cerevisiae (strain RM11-1a) (Baker's yeast).